Consider the following 408-residue polypeptide: MTQINENYLKLKAGYLFPEIGRRVKAYSDANQNAKIIRLGIGDVTLPLAPTIVNAMVDAAKEMGSAGGFHGYGPEQGYSFLIQKIIAHDYTARGVQIAEDEVFVSDGSKCDCGNIQEIFSLDSKIAVVDPVYPVYVDTNVMAGRTGEVGPDGRYANIVYMPATEENNFEPDFPKEKADIIYLCYPNNPTGMVATKARLTEWVNYAKKMGSIILYDSAYESFIQDPEIPKSIYEIPGAKEVAMEFRSFSKTAGFTGTRCAYLVIPKDLKGKTKSGEEVSFNSLWNRRHTTKFNGVSYITQKGAEAVFSAQGQVEIKEQISYYMENAKLIREGLVKAGYTVFGGTNAPYIWLKTPRGLKSWEFFDELLGTAQVVGTPGSGFGPAGEGYFRLSAFGKREDVISAIERIQKM.

2 residues coordinate substrate: tyrosine 15 and glycine 42. Pyridoxal 5'-phosphate-binding positions include tyrosine 72, 108 to 109 (SK), tyrosine 132, asparagine 187, tyrosine 218, and 246 to 248 (SFS). Residues lysine 109, tyrosine 132, and asparagine 187 each coordinate substrate. An N6-(pyridoxal phosphate)lysine modification is found at lysine 249. Arginine 257 and asparagine 292 together coordinate pyridoxal 5'-phosphate. Asparagine 292 and arginine 388 together coordinate substrate.

This sequence belongs to the class-I pyridoxal-phosphate-dependent aminotransferase family. LL-diaminopimelate aminotransferase subfamily. In terms of assembly, homodimer. It depends on pyridoxal 5'-phosphate as a cofactor.

The enzyme catalyses (2S,6S)-2,6-diaminopimelate + 2-oxoglutarate = (S)-2,3,4,5-tetrahydrodipicolinate + L-glutamate + H2O + H(+). Its pathway is amino-acid biosynthesis; L-lysine biosynthesis via DAP pathway; LL-2,6-diaminopimelate from (S)-tetrahydrodipicolinate (aminotransferase route): step 1/1. In terms of biological role, involved in the synthesis of meso-diaminopimelate (m-DAP or DL-DAP), required for both lysine and peptidoglycan biosynthesis. Catalyzes the direct conversion of tetrahydrodipicolinate to LL-diaminopimelate. The polypeptide is LL-diaminopimelate aminotransferase (Leptospira biflexa serovar Patoc (strain Patoc 1 / Ames)).